The sequence spans 486 residues: ATP synthase subunit beta (486 aa).

Residue 164-171 participates in ATP binding; it reads GGAGVGKT.

This sequence belongs to the ATPase alpha/beta chains family. In terms of assembly, F-type ATPases have 2 components, CF(1) - the catalytic core - and CF(0) - the membrane proton channel. CF(1) has five subunits: alpha(3), beta(3), gamma(1), delta(1), epsilon(1). CF(0) has four main subunits: a(1), b(1), b'(1) and c(9-12).

Its subcellular location is the cellular thylakoid membrane. It carries out the reaction ATP + H2O + 4 H(+)(in) = ADP + phosphate + 5 H(+)(out). Its function is as follows. Produces ATP from ADP in the presence of a proton gradient across the membrane. The catalytic sites are hosted primarily by the beta subunits. The polypeptide is ATP synthase subunit beta (Prochlorococcus marinus (strain MIT 9301)).